The primary structure comprises 174 residues: Rubredoxin-2 (174 aa).

Residues 1–53 (MAKYQCPDCEYIYDEVAGHPHEGFPPGTSWETIPEEWACPDCAVRDKADFVVI) form the Rubredoxin-like 1 domain. Fe cation contacts are provided by Cys6, Cys9, Cys39, and Cys42. Residues 56–65 (GSASPASGAA) show a composition bias toward low complexity. The segment at 56–115 (GSASPASGAATPEVRTATTPPKAEASPQKSTGASTPSANNKAKAKAKAKPARAKSSKDST) is disordered. A compositionally biased stretch (basic residues) spans 97–109 (AKAKAKAKPARAK). In terms of domain architecture, Rubredoxin-like 2 spans 121–172 (FRKWICITCGHIYDEALGDETEGFAPGTLFEDIPDDWCCPDCGATKEDYVLH). Fe cation is bound by residues Cys126, Cys129, Cys159, and Cys162.

It belongs to the rubredoxin family. The cofactor is Fe(3+).

It localises to the cytoplasm. It participates in hydrocarbon metabolism; alkane degradation. In terms of biological role, involved in the hydrocarbon hydroxylating system, which transfers electrons from NADH to rubredoxin reductase and then through rubredoxin to alkane 1 monooxygenase. In Alcanivorax borkumensis (strain ATCC 700651 / DSM 11573 / NCIMB 13689 / SK2), this protein is Rubredoxin-2 (alkG).